A 340-amino-acid chain; its full sequence is DNA-directed RNA polymerase subunit alpha (340 aa).

The alpha N-terminal domain (alpha-NTD) stretch occupies residues 1-236 (MLSLSKNWNT…EQLQLFISFE (236 aa)). The segment at 251–340 (FSPYLLKRVD…LSKRYEDSYN (90 aa)) is alpha C-terminal domain (alpha-CTD).

It belongs to the RNA polymerase alpha chain family. As to quaternary structure, homodimer. The RNAP catalytic core consists of 2 alpha, 1 beta, 1 beta' and 1 omega subunit. When a sigma factor is associated with the core the holoenzyme is formed, which can initiate transcription.

It carries out the reaction RNA(n) + a ribonucleoside 5'-triphosphate = RNA(n+1) + diphosphate. In terms of biological role, DNA-dependent RNA polymerase catalyzes the transcription of DNA into RNA using the four ribonucleoside triphosphates as substrates. The polypeptide is DNA-directed RNA polymerase subunit alpha (Rickettsia africae (strain ESF-5)).